A 153-amino-acid chain; its full sequence is 6,7-dimethyl-8-ribityllumazine synthase 1 (153 aa).

5-amino-6-(D-ribitylamino)uracil-binding positions include F16, 50-52, and 74-76; these read AYE and CVI. 79–80 lines the (2S)-2-hydroxy-3-oxobutyl phosphate pocket; the sequence is ET. H82 functions as the Proton donor in the catalytic mechanism. Residue F107 coordinates 5-amino-6-(D-ribitylamino)uracil. Position 121 (R121) interacts with (2S)-2-hydroxy-3-oxobutyl phosphate.

It belongs to the DMRL synthase family.

The enzyme catalyses (2S)-2-hydroxy-3-oxobutyl phosphate + 5-amino-6-(D-ribitylamino)uracil = 6,7-dimethyl-8-(1-D-ribityl)lumazine + phosphate + 2 H2O + H(+). It participates in cofactor biosynthesis; riboflavin biosynthesis; riboflavin from 2-hydroxy-3-oxobutyl phosphate and 5-amino-6-(D-ribitylamino)uracil: step 1/2. Catalyzes the formation of 6,7-dimethyl-8-ribityllumazine by condensation of 5-amino-6-(D-ribitylamino)uracil with 3,4-dihydroxy-2-butanone 4-phosphate. This is the penultimate step in the biosynthesis of riboflavin. The sequence is that of 6,7-dimethyl-8-ribityllumazine synthase 1 from Caulobacter vibrioides (strain ATCC 19089 / CIP 103742 / CB 15) (Caulobacter crescentus).